A 423-amino-acid chain; its full sequence is Growth hormone-releasing hormone receptor (423 aa).

The signal sequence occupies residues 1–22; it reads MDSGVWAACIFCLLSSLPVALG. Residues 23–130 are Extracellular-facing; it reads HVHPECDFIT…DEKSYFSTVR (108 aa). Disulfide bonds link cysteine 41–cysteine 64, cysteine 55–cysteine 96, and cysteine 78–cysteine 112. The N-linked (GlcNAc...) asparagine glycan is linked to asparagine 50. The chain crosses the membrane as a helical span at residues 131–151; it reads IVYTTGHSVSAVALFVAIAIL. Residues 152 to 167 are Cytoplasmic-facing; the sequence is VALRRLHCPRNYIHSQ. A helical transmembrane segment spans residues 168–188; sequence LFATFILKAGAVFLKDAALFH. Over 189–210 the chain is Extracellular; the sequence is SENTDHCSFSTVLCKVSVATSH. A helical transmembrane segment spans residues 211-231; sequence FATMTNFSWLLAEAVYLTCLL. Residues 232-240 lie on the Cytoplasmic side of the membrane; it reads ASTSPSTRR. A helical membrane pass occupies residues 241 to 261; it reads AFWWLVLAGWGLPLLFTGTWV. Residues 262-283 are Extracellular-facing; that stretch reads GCKLAFEDVACWDLDDSSPYWW. Residues 284–304 form a helical membrane-spanning segment; sequence IIKGPIVLSVGVNFGLFLNII. At 305–331 the chain is on the cytoplasmic side; that stretch reads RILLRKLEPAQGSLHTQPQYWRLSKST. Residues 332-352 form a helical membrane-spanning segment; sequence LLLIPLFGIHYVIFNFLPDSA. At 353-357 the chain is on the extracellular side; the sequence is GLGIR. Residues 358-378 form a helical membrane-spanning segment; that stretch reads LPLELGLGSFQGFIVAILYCF. The Cytoplasmic portion of the chain corresponds to 379 to 423; it reads LNQEVRTEISRRWHGHDPELLPAWRTHAKWAKPSRSRAKVLTTVC.

This sequence belongs to the G-protein coupled receptor 2 family. As to expression, pituitary gland. Also detected in the lymphocytes and thymocytes.

The protein resides in the cell membrane. Its function is as follows. Receptor for GRF, coupled to G proteins which activate adenylyl cyclase. Stimulates somatotroph cell growth, growth hormone gene transcription and growth hormone secretion. The polypeptide is Growth hormone-releasing hormone receptor (GHRHR) (Sus scrofa (Pig)).